Reading from the N-terminus, the 235-residue chain is Ribitol-5-phosphate cytidylyltransferase (235 aa).

CTP is bound by residues 7–10 (LAGG), 82–88 (GADRNTS), and Ser113.

This sequence belongs to the IspD/TarI cytidylyltransferase family. TarI subfamily.

The enzyme catalyses D-ribitol 5-phosphate + CTP + H(+) = CDP-L-ribitol + diphosphate. It functions in the pathway cell wall biogenesis; poly(ribitol phosphate) teichoic acid biosynthesis. Catalyzes the transfer of the cytidylyl group of CTP to D-ribitol 5-phosphate. This chain is Ribitol-5-phosphate cytidylyltransferase, found in Streptococcus pneumoniae (strain Hungary19A-6).